Consider the following 283-residue polypeptide: MNHIPVLSSELISGLVIRPRGLYLDATLGFGGHTKLILAAAPEVKVVAIDQDKQALDSSQTLLASYNSNIQFCHSNFADYDPQNLKFDGILADLGINSVQLDTPERGFSFRHQGKLDMRMNQQQTITAAKIINHWEEVKLANIFYTYGEERLSRRIARKIIESRPLETTTELAEVVANCVPYKYRYGRIHPATRVFQALRIEVNQELSRLETFLKNAPHWLKIGGRIGIISFHSLEDRLVKHSLRNASILKVLTKKPIQPQDNEVAINPRARSAKLRLAEKLS.

S-adenosyl-L-methionine is bound by residues 31–33, Asp50, Phe77, Asp93, and Gln100; that span reads GGH.

This sequence belongs to the methyltransferase superfamily. RsmH family.

It localises to the cytoplasm. It catalyses the reaction cytidine(1402) in 16S rRNA + S-adenosyl-L-methionine = N(4)-methylcytidine(1402) in 16S rRNA + S-adenosyl-L-homocysteine + H(+). Its function is as follows. Specifically methylates the N4 position of cytidine in position 1402 (C1402) of 16S rRNA. This chain is Ribosomal RNA small subunit methyltransferase H, found in Trichodesmium erythraeum (strain IMS101).